Here is a 173-residue protein sequence, read N- to C-terminus: Small ribosomal subunit protein uS10m (173 aa).

The protein belongs to the universal ribosomal protein uS10 family. In terms of assembly, component of the mitochondrial ribosome small subunit (28S) which comprises a 12S rRNA and about 30 distinct proteins.

Its subcellular location is the mitochondrion. This Drosophila melanogaster (Fruit fly) protein is Small ribosomal subunit protein uS10m (mRpS10).